An 86-amino-acid polypeptide reads, in one-letter code: Muscarinic toxin 38 (86 aa).

The signal sequence occupies residues 1–21; sequence MKTLLLTLVVVTIVCLDLGYT. Cystine bridges form between Cys24/Cys45, Cys38/Cys63, Cys67/Cys78, and Cys79/Cys84.

It belongs to the three-finger toxin family. Short-chain subfamily. Aminergic toxin sub-subfamily. In terms of assembly, monomer. Expressed by the venom gland.

It localises to the secreted. In terms of biological role, binds to the muscarinic acetylcholine receptor (CHRM). The polypeptide is Muscarinic toxin 38 (Ophiophagus hannah (King cobra)).